Reading from the N-terminus, the 519-residue chain is MDLVGVASPEPGTAAAWGPSKCPWAIPQNTISCSLADVMSEQLAKELQLEEEAAVFPEVAVAEGPFITGENIDTSSDLMLAQMLQMEYDREYDAQLRREEKKFNGDSKVSISFENYRKVHPYEDSDSSEDEVDWQDTRDDPYRPAKPVPTPKKGFIGKGKDITTKHDEVVCGRKNTARMENFAPEFQVGDGIGMDLKLSNHVFNALKQHAYSEERRSARLHEKKEHSTAEKAVDPKTRLLMYKMVNSGMLETITGCISTGKESVVFHAYGGSMEDEKEDSKVIPTECAIKVFKTTLNEFKNRDKYIKDDFRFKDRFSKLNPRKIIRMWAEKEMHNLARMQRAGIPCPTVVLLKKHILVMSFIGHDQVPAPKLKEVKLNSEEMKEAYYQTLHLMRQLYHECTLVHADLSEYNMLWHAGKVWLIDVSQSVEPTHPHGLEFLFRDCRNVSQFFQKGGVKEALSERELFNAVSGLNITADNEADFLAEIEALEKMNEDHVQKNGRKAASFLKDDGDPPLLYDE.

Phosphoserine is present on residues Ser-8 and Ser-112. Positions 121–159 are disordered; the sequence is PYEDSDSSEDEVDWQDTRDDPYRPAKPVPTPKKGFIGKG. The residue at position 122 (Tyr-122) is a Phosphotyrosine. Over residues 124–134 the composition is skewed to acidic residues; that stretch reads DSDSSEDEVDW. Phosphoserine is present on residues Ser-125, Ser-127, and Ser-128. Residues 251-519 form the Protein kinase domain; the sequence is ETITGCISTG…DGDPPLLYDE (269 aa). ATP-binding positions include 257–265 and Lys-290; that span reads ISTGKESVV. Asp-406 (proton acceptor) is an active-site residue.

This sequence belongs to the protein kinase superfamily. RIO-type Ser/Thr kinase family. In terms of assembly, interacts with CASP10. Interacts with IRF3; RIOK3 probably mediates the interaction of TBK1 with IRF3. Associated with 40S pre-ribosomal particles. The cofactor is Mg(2+). In terms of processing, autophosphorylated (in vitro). As to expression, widely expressed.

The protein resides in the cytoplasm. The enzyme catalyses L-seryl-[protein] + ATP = O-phospho-L-seryl-[protein] + ADP + H(+). It catalyses the reaction L-threonyl-[protein] + ATP = O-phospho-L-threonyl-[protein] + ADP + H(+). In terms of biological role, involved in regulation of type I interferon (IFN)-dependent immune response which plays a critical role in the innate immune response against DNA and RNA viruses. May act as an adapter protein essential for the recruitment of TBK1 to IRF3. Phosphorylates IFIH1 on 'Ser-828' interfering with IFIH1 filament assembly on long dsRNA and resulting in attenuated IFIH1-signaling. Can inhibit CASP10 isoform 7-mediated activation of the NF-kappaB signaling pathway. May play a role in the biogenesis of the 40S ribosomal subunit. Involved in the processing of 21S pre-rRNA to the mature 18S rRNA. This is Serine/threonine-protein kinase RIO3 (RIOK3) from Homo sapiens (Human).